The chain runs to 576 residues: MAEGTSQRPLTPLSQAFLSTNTLSPASSPLTFHSEAASLRRKRSNFFPKLDELNGAQDEEMRGLNIPGGSGYLENRYGRDKFTFSDAAVNSAGMGGSGIFSHNNADDGLGDGSSTVLPSSLKQMLDPEISTANNPSAKPRRTRLQTAWKEATNSAGLSLRSASALDVLKNSGPATTSLLSSTTYPFDSLNAFNEPSHSHVPNSASSTALSRGMSNSVTLTAPPEPDEETIPTAIVIKNIPFSLKKEVLFKVFTALDIPRPYAFNYHFDNGVFRGLAFANFHSPEEAKTVVQVLNGYEITGRRLRVEWKRQLPPAERERVERGKQEKRAVEERKNQLKSPFSVANIGAGIDFDLNDPAILNVYSHILLFYYRSDNTNDLVFDSSTTQEERRVAALLASRLNLNHSVTGDGEAKQVVITMPSTHFTPANNSSANHSPLMAPNASTLNPSSLGASNLSQPSLANHLSSSGLFDNGLFSSGGLSSNFSSLRRPAPSMHLADSIRSLRGLNDSKAFSDIRSMPATPLELATPFANLNVSSPLDRNATNSSNTLNGSAMNDYFASLTPSNTGAIGSRTFTKN.

In terms of domain architecture, RRM spans 232 to 310 (TAIVIKNIPF…RRLRVEWKRQ (79 aa)). An R3H domain is found at 355 to 420 (DPAILNVYSH…AKQVVITMPS (66 aa)).

Interacts with csx1. Phosphorylated by sty1.

The protein localises to the cytoplasm. In terms of biological role, regulates global gene expression after oxidative stress. Interacts and stabilizes mRNAs and may regulate their transition between different cytoplasmic components after oxidative stress. The polypeptide is RNA-binding post-transcriptional regulator cip2 (cip2) (Schizosaccharomyces pombe (strain 972 / ATCC 24843) (Fission yeast)).